The following is a 444-amino-acid chain: Methylenetetrahydrofolate--tRNA-(uracil-5-)-methyltransferase TrmFO (444 aa).

An FAD-binding site is contributed by Gly-10–Gly-15.

Belongs to the MnmG family. TrmFO subfamily. The cofactor is FAD.

It is found in the cytoplasm. The catalysed reaction is uridine(54) in tRNA + (6R)-5,10-methylene-5,6,7,8-tetrahydrofolate + NADH + H(+) = 5-methyluridine(54) in tRNA + (6S)-5,6,7,8-tetrahydrofolate + NAD(+). It carries out the reaction uridine(54) in tRNA + (6R)-5,10-methylene-5,6,7,8-tetrahydrofolate + NADPH + H(+) = 5-methyluridine(54) in tRNA + (6S)-5,6,7,8-tetrahydrofolate + NADP(+). Functionally, catalyzes the folate-dependent formation of 5-methyl-uridine at position 54 (M-5-U54) in all tRNAs. The chain is Methylenetetrahydrofolate--tRNA-(uracil-5-)-methyltransferase TrmFO from Streptococcus equi subsp. equi (strain 4047).